Consider the following 290-residue polypeptide: Light-independent protochlorophyllide reductase iron-sulfur ATP-binding protein (290 aa).

ATP is bound by residues 10–15 (GIGKST) and K39. S14 lines the Mg(2+) pocket. Positions 95 and 129 each coordinate [4Fe-4S] cluster. Residue 180–181 (NR) participates in ATP binding.

This sequence belongs to the NifH/BchL/ChlL family. As to quaternary structure, homodimer. Protochlorophyllide reductase is composed of three subunits; ChlL, ChlN and ChlB. [4Fe-4S] cluster serves as cofactor.

The protein resides in the plastid. It is found in the chloroplast. It catalyses the reaction chlorophyllide a + oxidized 2[4Fe-4S]-[ferredoxin] + 2 ADP + 2 phosphate = protochlorophyllide a + reduced 2[4Fe-4S]-[ferredoxin] + 2 ATP + 2 H2O. The protein operates within porphyrin-containing compound metabolism; chlorophyll biosynthesis (light-independent). Component of the dark-operative protochlorophyllide reductase (DPOR) that uses Mg-ATP and reduced ferredoxin to reduce ring D of protochlorophyllide (Pchlide) to form chlorophyllide a (Chlide). This reaction is light-independent. The L component serves as a unique electron donor to the NB-component of the complex, and binds Mg-ATP. This is Light-independent protochlorophyllide reductase iron-sulfur ATP-binding protein from Porphyra purpurea (Red seaweed).